Reading from the N-terminus, the 253-residue chain is Imidazole glycerol phosphate synthase subunit HisF (253 aa).

Catalysis depends on residues aspartate 11 and aspartate 130.

Belongs to the HisA/HisF family. As to quaternary structure, heterodimer of HisH and HisF.

It localises to the cytoplasm. It carries out the reaction 5-[(5-phospho-1-deoxy-D-ribulos-1-ylimino)methylamino]-1-(5-phospho-beta-D-ribosyl)imidazole-4-carboxamide + L-glutamine = D-erythro-1-(imidazol-4-yl)glycerol 3-phosphate + 5-amino-1-(5-phospho-beta-D-ribosyl)imidazole-4-carboxamide + L-glutamate + H(+). Its pathway is amino-acid biosynthesis; L-histidine biosynthesis; L-histidine from 5-phospho-alpha-D-ribose 1-diphosphate: step 5/9. Functionally, IGPS catalyzes the conversion of PRFAR and glutamine to IGP, AICAR and glutamate. The HisF subunit catalyzes the cyclization activity that produces IGP and AICAR from PRFAR using the ammonia provided by the HisH subunit. In Roseobacter denitrificans (strain ATCC 33942 / OCh 114) (Erythrobacter sp. (strain OCh 114)), this protein is Imidazole glycerol phosphate synthase subunit HisF.